The sequence spans 484 residues: tRNA sulfurtransferase (484 aa).

One can recognise a THUMP domain in the interval 63 to 167; sequence ERLVEALKCI…NKDLFIVTQR (105 aa). Residues 185–186, Lys267, Gly289, and Gln298 each bind ATP; that span reads LM. Cys346 and Cys458 form a disulfide bridge. In terms of domain architecture, Rhodanese spans 406–484; the sequence is IPENAVVVDI…GFKNVKVYRP (79 aa). Cys458 serves as the catalytic Cysteine persulfide intermediate.

Belongs to the ThiI family.

The protein localises to the cytoplasm. The enzyme catalyses [ThiI sulfur-carrier protein]-S-sulfanyl-L-cysteine + a uridine in tRNA + 2 reduced [2Fe-2S]-[ferredoxin] + ATP + H(+) = [ThiI sulfur-carrier protein]-L-cysteine + a 4-thiouridine in tRNA + 2 oxidized [2Fe-2S]-[ferredoxin] + AMP + diphosphate. The catalysed reaction is [ThiS sulfur-carrier protein]-C-terminal Gly-Gly-AMP + S-sulfanyl-L-cysteinyl-[cysteine desulfurase] + AH2 = [ThiS sulfur-carrier protein]-C-terminal-Gly-aminoethanethioate + L-cysteinyl-[cysteine desulfurase] + A + AMP + 2 H(+). It functions in the pathway cofactor biosynthesis; thiamine diphosphate biosynthesis. In terms of biological role, catalyzes the ATP-dependent transfer of a sulfur to tRNA to produce 4-thiouridine in position 8 of tRNAs, which functions as a near-UV photosensor. Also catalyzes the transfer of sulfur to the sulfur carrier protein ThiS, forming ThiS-thiocarboxylate. This is a step in the synthesis of thiazole, in the thiamine biosynthesis pathway. The sulfur is donated as persulfide by IscS. This Colwellia psychrerythraea (strain 34H / ATCC BAA-681) (Vibrio psychroerythus) protein is tRNA sulfurtransferase.